The chain runs to 125 residues: Small ribosomal subunit protein uS12 (125 aa).

A 3-methylthioaspartic acid modification is found at Asp-89.

This sequence belongs to the universal ribosomal protein uS12 family. Part of the 30S ribosomal subunit. Contacts proteins S8 and S17. May interact with IF1 in the 30S initiation complex.

With S4 and S5 plays an important role in translational accuracy. In terms of biological role, interacts with and stabilizes bases of the 16S rRNA that are involved in tRNA selection in the A site and with the mRNA backbone. Located at the interface of the 30S and 50S subunits, it traverses the body of the 30S subunit contacting proteins on the other side and probably holding the rRNA structure together. The combined cluster of proteins S8, S12 and S17 appears to hold together the shoulder and platform of the 30S subunit. In Clostridium novyi (strain NT), this protein is Small ribosomal subunit protein uS12.